The chain runs to 510 residues: UDP-N-acetylmuramoylalanine--D-glutamate ligase (510 aa).

138 to 144 (GTNGKTT) is a binding site for ATP. Residues 294–316 (FDEPAPAPRRKKDAPPPTRAGGR) are disordered.

This sequence belongs to the MurCDEF family.

The protein resides in the cytoplasm. It carries out the reaction UDP-N-acetyl-alpha-D-muramoyl-L-alanine + D-glutamate + ATP = UDP-N-acetyl-alpha-D-muramoyl-L-alanyl-D-glutamate + ADP + phosphate + H(+). It participates in cell wall biogenesis; peptidoglycan biosynthesis. Functionally, cell wall formation. Catalyzes the addition of glutamate to the nucleotide precursor UDP-N-acetylmuramoyl-L-alanine (UMA). The polypeptide is UDP-N-acetylmuramoylalanine--D-glutamate ligase (Bordetella bronchiseptica (strain ATCC BAA-588 / NCTC 13252 / RB50) (Alcaligenes bronchisepticus)).